Consider the following 158-residue polypeptide: Ribonuclease HI (158 aa).

Positions Glu3 to Glu144 constitute an RNase H type-1 domain. Positions 12, 50, 72, and 136 each coordinate Mg(2+).

The protein belongs to the RNase H family. In terms of assembly, monomer. It depends on Mg(2+) as a cofactor.

It is found in the cytoplasm. It catalyses the reaction Endonucleolytic cleavage to 5'-phosphomonoester.. Functionally, endonuclease that specifically degrades the RNA of RNA-DNA hybrids. In Shewanella oneidensis (strain ATCC 700550 / JCM 31522 / CIP 106686 / LMG 19005 / NCIMB 14063 / MR-1), this protein is Ribonuclease HI.